Consider the following 272-residue polypeptide: 1,4-dihydroxy-2-naphthoyl-CoA synthase (272 aa).

Substrate-binding positions include R33, 72–76 (SGGDQ), Y84, 116–120 (YAIGG), T142, S148, Y245, and K260. 141–143 (QTG) is a binding site for hydrogencarbonate. The span at 253–264 (GRDAFKEKRDPD) shows a compositional bias: basic and acidic residues. The interval 253-272 (GRDAFKEKRDPDFDQFPKFP) is disordered.

The protein belongs to the enoyl-CoA hydratase/isomerase family. MenB subfamily. Hydrogencarbonate serves as cofactor.

The enzyme catalyses 2-succinylbenzoyl-CoA + H(+) = 1,4-dihydroxy-2-naphthoyl-CoA + H2O. Its pathway is quinol/quinone metabolism; 1,4-dihydroxy-2-naphthoate biosynthesis; 1,4-dihydroxy-2-naphthoate from chorismate: step 6/7. It functions in the pathway quinol/quinone metabolism; menaquinone biosynthesis. Functionally, converts o-succinylbenzoyl-CoA (OSB-CoA) to 1,4-dihydroxy-2-naphthoyl-CoA (DHNA-CoA). This is 1,4-dihydroxy-2-naphthoyl-CoA synthase from Staphylococcus haemolyticus (strain JCSC1435).